A 130-amino-acid chain; its full sequence is Glycine cleavage system H protein (130 aa).

Residues 25-106 (VALIGITDFA…PFDTWMVKLK (82 aa)) enclose the Lipoyl-binding domain. An N6-lipoyllysine modification is found at Lys66.

It belongs to the GcvH family. In terms of assembly, the glycine cleavage system is composed of four proteins: P, T, L and H. The cofactor is (R)-lipoate.

Its function is as follows. The glycine cleavage system catalyzes the degradation of glycine. The H protein shuttles the methylamine group of glycine from the P protein to the T protein. In Leptospira biflexa serovar Patoc (strain Patoc 1 / Ames), this protein is Glycine cleavage system H protein.